We begin with the raw amino-acid sequence, 883 residues long: Phosphoenolpyruvate carboxylase (883 aa).

Residues His138 and Lys546 contribute to the active site.

Belongs to the PEPCase type 1 family. Requires Mg(2+) as cofactor.

It carries out the reaction oxaloacetate + phosphate = phosphoenolpyruvate + hydrogencarbonate. Forms oxaloacetate, a four-carbon dicarboxylic acid source for the tricarboxylic acid cycle. This Salmonella schwarzengrund (strain CVM19633) protein is Phosphoenolpyruvate carboxylase.